A 115-amino-acid polypeptide reads, in one-letter code: Large ribosomal subunit protein bL20 (115 aa).

The protein belongs to the bacterial ribosomal protein bL20 family.

Binds directly to 23S ribosomal RNA and is necessary for the in vitro assembly process of the 50S ribosomal subunit. It is not involved in the protein synthesizing functions of that subunit. This chain is Large ribosomal subunit protein bL20, found in Synechococcus sp. (strain CC9311).